The sequence spans 618 residues: Nuclear RNA export factor 1 (618 aa).

Residues 1–15 (MADEGKSYNEHDDRV) are compositionally biased toward basic and acidic residues. The interval 1-113 (MADEGKSYNE…RGGAGTSQDG (113 aa)) is disordered. Position 2 is an N-acetylalanine (Ala-2). The minor non-specific RNA-binding stretch occupies residues 2-59 (ADEGKSYNEHDDRVSFPQRRKKGRGPFRWKCGEGNRRSGRGGSGVQSSRFEEDDGDVA). The RNA-binding (RBD) stretch occupies residues 2 to 117 (ADEGKSYNEH…GTSQDGTTKN (116 aa)). Residues 2-197 (ADEGKSYNEH…IIINASAPPY (196 aa)) are interaction with ALYREF/THOC4 and LUZP4. Basic residues predominate over residues 19 to 28 (QRRKKGRGPF). At Arg-41 the chain carries Asymmetric dimethylarginine; alternate. An Omega-N-methylarginine; alternate modification is found at Arg-41. The major non-specific RNA-binding stretch occupies residues 60–117 (MNDPQDGPRVRYNPYTNRPNRRGDGWHDRDRIHITVRRDRAPAERGGAGTSQDGTTKN). The interval 60–117 (MNDPQDGPRVRYNPYTNRPNRRGDGWHDRDRIHITVRRDRAPAERGGAGTSQDGTTKN) is RNA binding. The Nuclear localization signal signature appears at 66–99 (GPRVRYNPYTNRPNRRGDGWHDRDRIHITVRRDR). A compositionally biased stretch (basic and acidic residues) spans 80–102 (RRGDGWHDRDRIHITVRRDRAPA). The Nuclear export signal motif lies at 82-109 (GDGWHDRDRIHITVRRDRAPAERGGAGT). The RRM domain maps to 118–197 (WFKITIPYGR…IIINASAPPY (80 aa)). A 3'-nitrotyrosine modification is found at Tyr-125. 4 LRR repeats span residues 265–290 (ELLS…QKAP), 291–314 (NLKT…IKGL), 315–342 (KLEE…AIRE), and 343–370 (RFPK…TMLP). One can recognise an NTF2 domain in the interval 385–535 (LVLRFLQQYY…LCIVNDELFV (151 aa)). In terms of domain architecture, TAP-C spans 564–618 (PEQQEMLQAFSTQSGMNLEWSQKCLQDNNWDYTRSAQAFTLLKAKGEIPEVAFMK).

This sequence belongs to the NXF family. Heterodimer (via NTF2 domain) with NXT1. The formation of NXF1-NXT1 heterodimers is required for the NXF1-mediated nuclear mRNA export. Forms a complex with RANBP2/NUP358, NXT1 and RANGAP1. Associates with the exon junction complex (EJC). Associates with the transcription/export (TREX) complex. Found in a mRNA complex with UPF3A and UPF3B. Found in a post-splicing complex with RBM8A, UPF1, UPF2, UPF3A, UPF3B and RNPS1. Interacts (via N-terminus) with DHX9 (via N-terminus); this interaction is direct and negatively regulates NXF1-mediated nuclear export of constitutive transport element (CTE)-containing cellular mRNAs. Interacts with FYTTD1/UIF. Interacts with EIF4A3. Interacts with NUP42. Interacts with ALYREF/THOC4. Interacts with CHTOP. Interacts with FRG1 (via N-terminus). Interacts with LUZP4. Interacts with FMR1; the interaction occurs in a mRNA-dependent and polyribosomes-independent manner in the nucleus. Interacts with CPSF6 (via N-terminus); this interaction is direct. Interacts with RBM15. Interacts with RBM15B. Interacts with MCM3AP; this interaction is not mediated by RNA. Interacts with DDX3X (via C-terminus); this interaction may be partly involved in DDX3X nuclear export and in NXF1 localization to stress granules. Interacts with PABPC1/PABP1. Expressed ubiquitously.

It is found in the nucleus. The protein resides in the nucleoplasm. Its subcellular location is the nucleus speckle. The protein localises to the cytoplasm. It localises to the nuclear pore complex. It is found in the nucleus envelope. The protein resides in the stress granule. Its function is as follows. Involved in the nuclear export of mRNA species bearing retroviral constitutive transport elements (CTE) and in the export of mRNA from the nucleus to the cytoplasm (TAP/NFX1 pathway). The NXF1-NXT1 heterodimer is involved in the export of HSP70 mRNA in conjunction with ALYREF/THOC4 and THOC5 components of the TREX complex. ALYREF/THOC4-bound mRNA is thought to be transferred to the NXF1-NXT1 heterodimer for export. Also involved in nuclear export of m6A-containing mRNAs: interaction between SRSF3 and YTHDC1 facilitates m6A-containing mRNA-binding to both SRSF3 and NXF1, promoting mRNA nuclear export. This is Nuclear RNA export factor 1 (Nxf1) from Mus musculus (Mouse).